Reading from the N-terminus, the 316-residue chain is tRNA dimethylallyltransferase (316 aa).

Position 17-24 (17-24 (GPTASGKT)) interacts with ATP. 19–24 (TASGKT) lines the substrate pocket. Interaction with substrate tRNA regions lie at residues 42–45 (DSAL), 166–170 (QRLSR), and 247–252 (RCVGYR).

The protein belongs to the IPP transferase family. Monomer. Mg(2+) serves as cofactor.

It carries out the reaction adenosine(37) in tRNA + dimethylallyl diphosphate = N(6)-dimethylallyladenosine(37) in tRNA + diphosphate. Functionally, catalyzes the transfer of a dimethylallyl group onto the adenine at position 37 in tRNAs that read codons beginning with uridine, leading to the formation of N6-(dimethylallyl)adenosine (i(6)A). This Salmonella enteritidis PT4 (strain P125109) protein is tRNA dimethylallyltransferase.